A 218-amino-acid polypeptide reads, in one-letter code: Putative glutamine transport system permease protein GlnP (218 aa).

An ABC transmembrane type-1 domain is found at 19 to 208; sequence TLITLKYSVI…ILVMLISFIA (190 aa). A run of 4 helical transmembrane segments spans residues 25-45, 57-79, 86-108, and 187-207; these read YSVI…LCKV, FYTS…FASP, FTVF…SEVI, and FFPM…ISFI.

It belongs to the binding-protein-dependent transport system permease family. HisMQ subfamily.

It is found in the cell inner membrane. Its function is as follows. Part of the binding-protein-dependent transport system for glutamine; probably responsible for the translocation of the substrate across the membrane. The chain is Putative glutamine transport system permease protein GlnP (glnP) from Rickettsia bellii (strain RML369-C).